The following is a 1147-amino-acid chain: SR-related and CTD-associated factor 4 (1147 aa).

Positions 1-139 constitute a CID domain; the sequence is MDAVNAFNQE…PLLDMAAGTS (139 aa). K49 carries the post-translational modification N6-acetyllysine. Disordered regions lie at residues 145–179, 235–254, 269–331, and 424–502; these read AENV…AVPQ, KTTP…PEQK, DEPE…QQPA, and VKRH…KPET. S154 bears the Phosphoserine mark. Low complexity-rich tracts occupy residues 283–292 and 299–310; these read TAVTTTAPAA and TATVPAAAAPAA. Over residues 424–433 the composition is skewed to basic and acidic residues; sequence VKRHMSDNRK. Over residues 434–475 the composition is skewed to basic residues; that stretch reads SRSRSASRSPKRRRSRSGSRSRRSRHRRSRSRSRDRRRHSPR. Basic and acidic residues predominate over residues 477–492; the sequence is RSQERRDREKERERRQ. An RRM domain is found at 508–582; it reads TTLWVGQLDK…KSIKIAWALN (75 aa). Disordered regions lie at residues 629 to 661 and 879 to 1147; these read DWKG…IPKP and RPMP…EAPR. Position 656 is a phosphoserine (S656). The span at 879–913 shows a compositional bias: pro residues; that stretch reads RPMPPHMMHRGPPPGPGGFAMPPPHGMKGPFPPHG. Low complexity predominate over residues 941-965; sequence QQPPQQPQQQPQPQAPQQPQQQQQQ. A compositionally biased stretch (pro residues) spans 966–977; it reads QPPPSQQPPPTQ. S1004 carries the phosphoserine modification. The segment covering 1009 to 1085 has biased composition (basic and acidic residues); sequence VENDRERYGN…RGKEKPEVTD (77 aa).

Interacts with POLR2A; via C-terminal heptapeptide repeat domain (CTD) phosphorylated at 'Ser-2' and 'Ser-5'.

The protein resides in the nucleus. In terms of biological role, anti-terminator protein required to prevent early mRNA termination during transcription. Together with SCAF8, acts by suppressing the use of early, alternative poly(A) sites, thereby preventing the accumulation of non-functional truncated proteins. Mechanistically, associates with the phosphorylated C-terminal heptapeptide repeat domain (CTD) of the largest RNA polymerase II subunit (POLR2A), and subsequently binds nascent RNA upstream of early polyadenylation sites to prevent premature mRNA transcript cleavage and polyadenylation. Independently of SCAF8, also acts as a suppressor of transcriptional readthrough. This is SR-related and CTD-associated factor 4 from Homo sapiens (Human).